Consider the following 346-residue polypeptide: LRP2-binding protein (346 aa).

One copy of the TPR repeat lies at 58–91 (AMAYFLRGQLYFEEGWYEEALAQFEEIQEKDHQA). Sel1-like repeat units follow at residues 92-124 (IYQL…DSSC), 132-167 (FAAA…DNGN), 172-205 (VKAQ…GNGN), 206-241 (LESQ…ERGN), 242-276 (VYAQ…EVHD), and 296-331 (AMAS…RLNP).

In terms of assembly, interacts with LRP2.

It is found in the cytoplasm. Functionally, may act as an adapter that regulates LRP2 function. The chain is LRP2-binding protein (Lrp2bp) from Rattus norvegicus (Rat).